Here is a 376-residue protein sequence, read N- to C-terminus: Partitioning defective 6 homolog gamma (376 aa).

The 81-residue stretch at 18-98 (AVEVKSKFGA…PLLRVFIQKR (81 aa)) folds into the PB1 domain. Residues 127 to 254 (RRRAHLDIGL…VTVKPANQRN (128 aa)) are interaction with PARD3 and CDC42. The 18-residue stretch at 134-151 (IGLPRDFRPVSSIIDVDL) folds into the Pseudo-CRIB domain. The PDZ domain maps to 158–251 (RVRLHRHGCE…NLIVTVKPAN (94 aa)). Positions 356–376 (PRHSLALPPGGVEEHGPAVTL) are disordered. The segment covering 367–376 (VEEHGPAVTL) has biased composition (basic and acidic residues).

The protein belongs to the PAR6 family. As to quaternary structure, interacts with PARD3. Interacts with GTP-bound forms of CDC42, RHOQ/TC10 and RAC1. Interacts with the N-terminal part of PRKCI and PRKCZ. In terms of tissue distribution, widely expressed, with a higher expression in fetal and adult kidney.

It is found in the cytoplasm. The protein localises to the cell membrane. Its subcellular location is the cell junction. It localises to the tight junction. Its function is as follows. Adapter protein involved in asymmetrical cell division and cell polarization processes. May play a role in the formation of epithelial tight junctions. The PARD6-PARD3 complex links GTP-bound Rho small GTPases to atypical protein kinase C proteins. This is Partitioning defective 6 homolog gamma (PARD6G) from Homo sapiens (Human).